The primary structure comprises 213 residues: LexA repressor (213 aa).

The H-T-H motif DNA-binding region spans 29-49 (VREICNAVGFKSTSTVHSYLE). Active-site for autocatalytic cleavage activity residues include serine 136 and lysine 173.

It belongs to the peptidase S24 family. In terms of assembly, homodimer.

The enzyme catalyses Hydrolysis of Ala-|-Gly bond in repressor LexA.. Represses a number of genes involved in the response to DNA damage (SOS response), including recA and lexA. In the presence of single-stranded DNA, RecA interacts with LexA causing an autocatalytic cleavage which disrupts the DNA-binding part of LexA, leading to derepression of the SOS regulon and eventually DNA repair. In Acetivibrio thermocellus (strain ATCC 27405 / DSM 1237 / JCM 9322 / NBRC 103400 / NCIMB 10682 / NRRL B-4536 / VPI 7372) (Clostridium thermocellum), this protein is LexA repressor.